Consider the following 78-residue polypeptide: Acyl carrier protein (78 aa).

The 76-residue stretch at Ser-2–Gln-77 folds into the Carrier domain. Ser-37 bears the O-(pantetheine 4'-phosphoryl)serine mark.

It belongs to the acyl carrier protein (ACP) family. In terms of processing, 4'-phosphopantetheine is transferred from CoA to a specific serine of apo-ACP by AcpS. This modification is essential for activity because fatty acids are bound in thioester linkage to the sulfhydryl of the prosthetic group.

It is found in the cytoplasm. It functions in the pathway lipid metabolism; fatty acid biosynthesis. Functionally, carrier of the growing fatty acid chain in fatty acid biosynthesis. This Pseudomonas fluorescens (strain SBW25) protein is Acyl carrier protein.